We begin with the raw amino-acid sequence, 513 residues long: Ribonuclease Y (513 aa).

The chain crosses the membrane as a helical span at residues 6-26 (YIIIAVVIIIICVILGLYIVD). The 86-residue stretch at 203-288 (TVHVVNLPND…EMVEKAKKEV (86 aa)) folds into the KH domain. Residues 329 to 422 (VLKHSIEVSH…VQAADAISAA (94 aa)) enclose the HD domain.

Belongs to the RNase Y family.

The protein localises to the cell membrane. Functionally, endoribonuclease that initiates mRNA decay. The protein is Ribonuclease Y of Clostridium botulinum (strain ATCC 19397 / Type A).